The chain runs to 469 residues: Ribosomal protein uS12 methylthiotransferase RimO (469 aa).

One can recognise an MTTase N-terminal domain in the interval 34 to 144 (NKIGFVSLGC…VLEHVHQFAP (111 aa)). C43, C79, C108, C176, C180, and C183 together coordinate [4Fe-4S] cluster. Residues 162–399 (LTPKHYAYLK…MLVQQEISAA (238 aa)) enclose the Radical SAM core domain. The region spanning 402–468 (QKRIGSTMKV…EYDLWGSLVR (67 aa)) is the TRAM domain.

Belongs to the methylthiotransferase family. RimO subfamily. It depends on [4Fe-4S] cluster as a cofactor.

The protein localises to the cytoplasm. It catalyses the reaction L-aspartate(89)-[ribosomal protein uS12]-hydrogen + (sulfur carrier)-SH + AH2 + 2 S-adenosyl-L-methionine = 3-methylsulfanyl-L-aspartate(89)-[ribosomal protein uS12]-hydrogen + (sulfur carrier)-H + 5'-deoxyadenosine + L-methionine + A + S-adenosyl-L-homocysteine + 2 H(+). Catalyzes the methylthiolation of an aspartic acid residue of ribosomal protein uS12. The sequence is that of Ribosomal protein uS12 methylthiotransferase RimO from Vibrio vulnificus (strain CMCP6).